A 1092-amino-acid polypeptide reads, in one-letter code: Fibrinogen-binding protein (1092 aa).

An N-terminal signal peptide occupies residues 1 to 51 (MINKKNNLLTKKKPIANKSNKYAIRKFTVGTASIVIGATLLFGLGHNEAKA). Residues 50-63 (KAEENSVQDVKDSN) are compositionally biased toward basic and acidic residues. Positions 50–236 (KAEENSVQDV…GYTNIDEKIS (187 aa)) are disordered. Residues 52–599 (EENSVQDVKD…GQGQGDLPPE (548 aa)) are ligand binding A region. Acidic residues predominate over residues 64–76 (TDDELSDSNDQSS). Residues 84 to 98 (INNNQSINTDDNNQI) show a composition bias toward low complexity. The segment covering 99-119 (IKKEETNNYDGIEKRSEDRTE) has biased composition (basic and acidic residues). Residues 120–140 (STTNVDENEATFLQKTPQDNT) show a composition bias toward polar residues. The span at 141–151 (HLTEEEVKESS) shows a compositional bias: basic and acidic residues. Residues 160–170 (IDTAQQPSHTT) show a composition bias toward polar residues. The segment covering 195-220 (KIKESNTESGKEENTIEQPNKVKEDS) has biased composition (basic and acidic residues). The Ca(2+) site is built by Glu294, Ser299, Val302, and Glu309. The interval 579 to 590 (YDNTIAFSTSSG) is interaction with human fibrinogen. 2 CNA-B domains span residues 600 to 713 (KTYK…YQTP) and 714 to 824 (KYSL…YDDE). The disordered stretch occupies residues 780–1068 (KPSGMTQTTT…NEDYGSKGTL (289 aa)). Positions 791-801 (SGDDDEQDADG) are enriched in acidic residues. A compositionally biased stretch (basic and acidic residues) spans 802–814 (EEVHVTITDHDDF). The span at 820–1039 (YYDDESDSDS…DSDSDSDNDS (220 aa)) shows a compositional bias: acidic residues. Residues 1053–1057 (LPDTG) carry the LPXTG sorting signal motif. The residue at position 1056 (Thr1056) is a Pentaglycyl murein peptidoglycan amidated threonine. Residues 1057–1092 (GANEDYGSKGTLLGTLFAGLGALLLGKRRKNRKNKN) constitute a propeptide, removed by sortase.

This sequence belongs to the serine-aspartate repeat-containing protein (SDr) family.

It localises to the secreted. Its subcellular location is the cell wall. In terms of biological role, promotes bacterial attachment to both soluble and immobilized forms of fibrinogen in a dose-dependent manner. This binding occurs through the beta-chain of human fibrinogen. Could contribute to the initiation of foreign-body infection by allowing bacteria to adhere to biomaterial surfaces that have become coated with host proteins after implantation. Is important in the pathogenesis of central venous catheter (CVC)-associated infection model. This chain is Fibrinogen-binding protein (fbe), found in Staphylococcus epidermidis.